We begin with the raw amino-acid sequence, 131 residues long: Large ribosomal subunit protein uL14m (131 aa).

The protein belongs to the universal ribosomal protein uL14 family. In terms of assembly, component of the mitochondrial large ribosomal subunit (mt-LSU). Mature N.crassa 74S mitochondrial ribosomes consist of a small (37S) and a large (54S) subunit. The 37S small subunit contains a 16S ribosomal RNA (16S mt-rRNA) and 32 different proteins. The 54S large subunit contains a 23S rRNA (23S mt-rRNA) and 42 different proteins.

The protein resides in the mitochondrion. Functionally, component of the mitochondrial ribosome (mitoribosome), a dedicated translation machinery responsible for the synthesis of mitochondrial genome-encoded proteins, including at least some of the essential transmembrane subunits of the mitochondrial respiratory chain. The mitoribosomes are attached to the mitochondrial inner membrane and translation products are cotranslationally integrated into the membrane. The chain is Large ribosomal subunit protein uL14m (mrpl38) from Neurospora crassa (strain ATCC 24698 / 74-OR23-1A / CBS 708.71 / DSM 1257 / FGSC 987).